Here is a 150-residue protein sequence, read N- to C-terminus: S-protein homolog 24 (150 aa).

A glycan (N-linked (GlcNAc...) asparagine) is linked at N122.

The protein belongs to the plant self-incompatibility (S1) protein family.

The protein localises to the secreted. This Arabidopsis thaliana (Mouse-ear cress) protein is S-protein homolog 24.